A 339-amino-acid chain; its full sequence is Malate/(S)-sulfolactate dehydrogenase (339 aa).

Belongs to the LDH2/MDH2 oxidoreductase family. Homodimer.

It localises to the cytoplasm. The enzyme catalyses (S)-malate + NAD(+) = oxaloacetate + NADH + H(+). It carries out the reaction (S)-malate + NADP(+) = oxaloacetate + NADPH + H(+). The catalysed reaction is (2S)-3-sulfolactate + NAD(+) = 3-sulfopyruvate + NADH + H(+). Acts on oxaloacetate, sulfopyruvate but not on pyruvate. Has a higher selectivity for the coenzyme NADH than for NADPH. The protein is Malate/(S)-sulfolactate dehydrogenase (mdh) of Methanothermus fervidus (strain ATCC 43054 / DSM 2088 / JCM 10308 / V24 S).